We begin with the raw amino-acid sequence, 150 residues long: Large ribosomal subunit protein bL9 (150 aa).

This sequence belongs to the bacterial ribosomal protein bL9 family.

In terms of biological role, binds to the 23S rRNA. The polypeptide is Large ribosomal subunit protein bL9 (Serratia proteamaculans (strain 568)).